Reading from the N-terminus, the 627-residue chain is DNA topoisomerase 4 subunit B (627 aa).

ATP contacts are provided by residues Tyr-4, Asn-41, Asp-68, 109–115 (GLHGVGV), and Lys-333. The Toprim domain maps to 412–525 (TELFIVEGDS…NGHIYIAQPP (114 aa)). The Mg(2+) site is built by Glu-418, Asp-490, and Asp-492.

Belongs to the type II topoisomerase family. ParE type 1 subfamily. In terms of assembly, heterotetramer composed of ParC and ParE. Requires Mg(2+) as cofactor. Mn(2+) serves as cofactor. Ca(2+) is required as a cofactor.

It catalyses the reaction ATP-dependent breakage, passage and rejoining of double-stranded DNA.. Its activity is regulated as follows. Pyrrolopyrimidines inhibit both GyrB and its paralog in topoisomerase IV (parE). In terms of biological role, topoisomerase IV is essential for chromosome segregation. It relaxes supercoiled DNA. Performs the decatenation events required during the replication of a circular DNA molecule. This chain is DNA topoisomerase 4 subunit B, found in Francisella tularensis subsp. holarctica (strain LVS).